A 252-amino-acid polypeptide reads, in one-letter code: Tricin synthase 1 (252 aa).

Residues serine 65, glutamate 87, 89 to 90, serine 95, and aspartate 113 contribute to the S-adenosyl-L-methionine site; that span reads GV. Residue aspartate 168 coordinates a divalent metal cation. Aspartate 170 contacts S-adenosyl-L-methionine. The a divalent metal cation site is built by aspartate 194 and asparagine 195.

The protein belongs to the class I-like SAM-binding methyltransferase superfamily. Cation-dependent O-methyltransferase family. CCoAMT subfamily. The cofactor is Mg(2+). Mn(2+) is required as a cofactor. Co(2+) serves as cofactor. In terms of tissue distribution, ubiquitous. Highest expression in stems and roots.

The protein localises to the nucleus. The enzyme catalyses tricetin + 2 S-adenosyl-L-methionine = 3',5'-di-O-methyltricetin + 2 S-adenosyl-L-homocysteine + 2 H(+). Functionally, catalyzes the stepwise methylation of tricetin to its 3'-mono- and 3',5'-dimethyl ethers. No 3',4',5'-trimethylated ester derivatives are produced. Can use caffeoyl-CoA, 5-hydroxyferulic acid, luteolin, tricetin, quercetin, myrcetin and 7,8-dihydroxyflavone as substrates, but not naringenin, apigenin or kaempferol. The 2,3-double bond and the O-dihydroxyl group of the substrate are both required for catalytic activity of the enzyme. In Oryza sativa subsp. japonica (Rice), this protein is Tricin synthase 1 (ROMT-15).